The primary structure comprises 1260 residues: Ankyrin repeat and sterile alpha motif domain-containing protein 1B (1260 aa).

ANK repeat units lie at residues 2 to 31, 58 to 87, 91 to 120, 127 to 156, 160 to 189, 193 to 222, and 225 to 254; these read GKDQ…GGIL, SGYT…STNV, KGYF…SHSR, ENET…DPTI, KLET…NLMS, RKHT…DVSC, and EKGS…DANI. The segment at 298–326 is disordered; the sequence is HAQEDTAQETRLSSPAQSPSQKTKSETVT. Residues 306–326 are compositionally biased toward polar residues; the sequence is ETRLSSPAQSPSQKTKSETVT. Phosphoserine occurs at positions 310, 311, 315, 354, and 365. Disordered regions lie at residues 368–402, 491–513, and 556–642; these read ELGK…SCGP, PGTG…PSPD, and GCTS…EASL. Over residues 372 to 385 the composition is skewed to polar residues; sequence NGSQSVRTSSTINL. Phosphothreonine is present on threonine 504. Residues serine 508 and serine 511 each carry the phosphoserine modification. A compositionally biased stretch (low complexity) spans 556 to 575; sequence GCTSFTSSPPVSPPTSSVET. Positions 576–588 are enriched in basic and acidic residues; sequence TEIKNEGAEHTDD. Position 739 is a phosphoserine (serine 739). The disordered stretch occupies residues 754–778; the sequence is VNWSKSSTAERSSKDNSERTPSFTS. At threonine 773 the chain carries Phosphothreonine. Serine 775 is modified (phosphoserine). 2 consecutive SAM domains span residues 810-876 and 884-949; these read CPVQ…LPKM and YHPT…RLHE. A Phosphotyrosine modification is found at tyrosine 901. Residues 935–938 carry the Nuclear localization signal motif; that stretch reads HRKR. Positions 946–989 are disordered; the sequence is RLHEDPPQKPPRSITLREPSGNHTPPQLSPSLSQSTYTTGGSLD. Low complexity predominate over residues 969–984; it reads TPPQLSPSLSQSTYTT. Serine 974 is modified (phosphoserine). Tyrosine 1007 carries the phosphotyrosine modification. In terms of domain architecture, PID spans 1056-1213; sequence IFQSCDYKAF…SFENKPSKPI (158 aa). The interval 1197-1217 is disordered; that stretch reads HSSTLPESFENKPSKPIPKPR.

As to quaternary structure, interacts with EPHA8. Isoform 2 interacts with COIL. Isoform 3 interacts with DLG4. In terms of processing, nuclear translocation of isoform 3 requires an NMDAR-dependent proteolytic cleavage. A 35 kDa N-terminal form shuttles to the nucleus. Isoform 3 is brain specific and highly enriched in the postsynaptic densities (PSDs), especially in cortical, striatal and hippocampal PSDs.

It localises to the cytoplasm. Its subcellular location is the nucleus. It is found in the postsynaptic density. The protein localises to the cell projection. The protein resides in the dendritic spine. It localises to the cajal body. Its function is as follows. Isoform 2 may participate in the regulation of nucleoplasmic coilin protein interactions in neuronal and transformed cells. Isoform 3 can regulate global protein synthesis by altering nucleolar numbers. In Rattus norvegicus (Rat), this protein is Ankyrin repeat and sterile alpha motif domain-containing protein 1B (Anks1b).